An 81-amino-acid polypeptide reads, in one-letter code: MVHVVKIYDTCIGCTQCVRACPCDVLEMVPWDGCKASQIASSPRTEDCIGCKRCETACPTDFLSIRVYLGAETSRSMGLTY.

4Fe-4S ferredoxin-type domains are found at residues V2 to W31 and I39 to Y68. [4Fe-4S] cluster-binding residues include C11, C14, C17, C21, C48, C51, C54, and C58.

As to quaternary structure, the eukaryotic PSI reaction center is composed of at least 11 subunits. The cofactor is [4Fe-4S] cluster.

It localises to the plastid. Its subcellular location is the chloroplast thylakoid membrane. The enzyme catalyses reduced [plastocyanin] + hnu + oxidized [2Fe-2S]-[ferredoxin] = oxidized [plastocyanin] + reduced [2Fe-2S]-[ferredoxin]. Apoprotein for the two 4Fe-4S centers FA and FB of photosystem I (PSI); essential for photochemical activity. FB is the terminal electron acceptor of PSI, donating electrons to ferredoxin. The C-terminus interacts with PsaA/B/D and helps assemble the protein into the PSI complex. Required for binding of PsaD and PsaE to PSI. PSI is a plastocyanin/cytochrome c6-ferredoxin oxidoreductase, converting photonic excitation into a charge separation, which transfers an electron from the donor P700 chlorophyll pair to the spectroscopically characterized acceptors A0, A1, FX, FA and FB in turn. The sequence is that of Photosystem I iron-sulfur center from Cyanidium caldarium (Red alga).